The following is a 988-amino-acid chain: DExH-box ATP-dependent RNA helicase DExH9 (988 aa).

Positions 1-27 (MGSVKRKSVEESSDSAPPQKVQREDDS) are disordered. The Helicase ATP-binding domain maps to 76 to 232 (IKCLDNGESV…WVAKVHQQPC (157 aa)). 89-96 (AHTSAGKT) is an ATP binding site. Residues 180-183 (DEVH) carry the DEVH box motif. One can recognise a Helicase C-terminal domain in the interval 307–509 (DIFKLVKMII…SYNMLLNQLR (203 aa)).

The protein belongs to the DExH box helicase family. SKI2 subfamily. Ubiquitous but preferentially expressed in active tissues.

It localises to the nucleus. It is found in the nucleolus. The enzyme catalyses ATP + H2O = ADP + phosphate + H(+). Functionally, ATP-dependent RNA helicase that associates with the RNA exosome complex. Required for proper rRNA biogenesis and development. Involved in the 3'-processing of the 7S pre-RNA to the mature 5.8S rRNA and also in the removal of rRNA maturation by-products. This is DExH-box ATP-dependent RNA helicase DExH9 from Arabidopsis thaliana (Mouse-ear cress).